The primary structure comprises 31 residues: Dermaseptin-7.1TR (31 aa).

Gln31 is modified (glutamine amide).

Expressed by the skin glands.

The protein resides in the secreted. Functionally, has antimicrobial activity. This is Dermaseptin-7.1TR from Phyllomedusa trinitatis (Trinidad leaf frog).